Reading from the N-terminus, the 400-residue chain is Enoyl-[acyl-carrier-protein] reductase [NADH] (400 aa).

NAD(+) is bound by residues 48 to 53 (GASTGY), 74 to 75 (FE), 111 to 112 (DA), and 139 to 140 (LA). Y225 contributes to the substrate binding site. The Proton donor role is filled by Y235. Residues K244 and 273–275 (VVT) each bind NAD(+).

This sequence belongs to the TER reductase family. Monomer.

The enzyme catalyses a 2,3-saturated acyl-[ACP] + NAD(+) = a (2E)-enoyl-[ACP] + NADH + H(+). It participates in lipid metabolism; fatty acid biosynthesis. Functionally, involved in the final reduction of the elongation cycle of fatty acid synthesis (FAS II). Catalyzes the reduction of a carbon-carbon double bond in an enoyl moiety that is covalently linked to an acyl carrier protein (ACP). The polypeptide is Enoyl-[acyl-carrier-protein] reductase [NADH] (Burkholderia ambifaria (strain ATCC BAA-244 / DSM 16087 / CCUG 44356 / LMG 19182 / AMMD) (Burkholderia cepacia (strain AMMD))).